The chain runs to 255 residues: Developmental and secondary metabolism regulator MVE1 (255 aa).

One can recognise a Velvet domain in the interval 31–226 (GRKLTYRMSV…AEQGCRVRIR (196 aa)). The Nuclear localization signal signature appears at 45 to 50 (VRARAC). Disordered regions lie at residues 163–184 (CKSP…DAHV) and 229–255 (VRMR…QARA). Acidic residues predominate over residues 245 to 255 (NYEDETAQARA).

Belongs to the velvet family. VeA subfamily. In terms of assembly, component of the heterotrimeric velvet complex composed of LAE1, MVE1 and VEL2; MVE1 acting as a bridging protein between LAE1 and VEL2.

Its subcellular location is the nucleus. The protein resides in the cytoplasm. Its function is as follows. Component of the velvet transcription factor complex that controls sexual/asexual developmental ratio in response to light, promoting sexual development in the darkness while stimulating asexual sporulation under illumination. The velvet complex hat acts as a global regulator for secondary metabolite gene expression. Controls the expression of the melanin gene cluster. Mediates the light-stimulated formation of aerial mycelia. In Zymoseptoria tritici (strain CBS 115943 / IPO323) (Speckled leaf blotch fungus), this protein is Developmental and secondary metabolism regulator MVE1.